The following is a 430-amino-acid chain: Serine hydroxymethyltransferase (430 aa).

Residue 120-122 (GHI) participates in (6S)-5,6,7,8-tetrahydrofolate binding. Position 226 is an N6-(pyridoxal phosphate)lysine (K226).

Belongs to the SHMT family. As to quaternary structure, homodimer. The cofactor is pyridoxal 5'-phosphate.

It is found in the cytoplasm. The protein operates within amino-acid biosynthesis; glycine biosynthesis; glycine from L-serine: step 1/1. In terms of biological role, catalyzes the reversible interconversion of serine and glycine with a modified folate serving as the one-carbon carrier. Also exhibits a pteridine-independent aldolase activity toward beta-hydroxyamino acids, producing glycine and aldehydes, via a retro-aldol mechanism. In Pyrobaculum aerophilum (strain ATCC 51768 / DSM 7523 / JCM 9630 / CIP 104966 / NBRC 100827 / IM2), this protein is Serine hydroxymethyltransferase.